Here is a 227-residue protein sequence, read N- to C-terminus: dTTP/UTP pyrophosphatase (227 aa).

D98 serves as the catalytic Proton acceptor.

It belongs to the Maf family. YhdE subfamily. A divalent metal cation serves as cofactor.

The protein localises to the cytoplasm. The enzyme catalyses dTTP + H2O = dTMP + diphosphate + H(+). It catalyses the reaction UTP + H2O = UMP + diphosphate + H(+). Nucleoside triphosphate pyrophosphatase that hydrolyzes dTTP and UTP. May have a dual role in cell division arrest and in preventing the incorporation of modified nucleotides into cellular nucleic acids. This is dTTP/UTP pyrophosphatase from Bartonella quintana (strain Toulouse) (Rochalimaea quintana).